The following is a 452-amino-acid chain: Tubulin alpha-8 chain (452 aa).

The GTP site is built by Gln15, Glu74, Ser143, Gly147, Thr148, Thr182, Asn209, and Asn231. Position 74 (Glu74) interacts with Mg(2+). Residue Glu257 is part of the active site.

The protein belongs to the tubulin family. As to quaternary structure, dimer of alpha and beta chains. A typical microtubule is a hollow water-filled tube with an outer diameter of 25 nm and an inner diameter of 15 nM. Alpha-beta heterodimers associate head-to-tail to form protofilaments running lengthwise along the microtubule wall with the beta-tubulin subunit facing the microtubule plus end conferring a structural polarity. Microtubules usually have 13 protofilaments but different protofilament numbers can be found in some organisms and specialized cells. Mg(2+) serves as cofactor.

It is found in the cytoplasm. The protein localises to the cytoskeleton. The enzyme catalyses GTP + H2O = GDP + phosphate + H(+). Its function is as follows. Tubulin is the major constituent of microtubules, a cylinder consisting of laterally associated linear protofilaments composed of alpha- and beta-tubulin heterodimers. Microtubules grow by the addition of GTP-tubulin dimers to the microtubule end, where a stabilizing cap forms. Below the cap, tubulin dimers are in GDP-bound state, owing to GTPase activity of alpha-tubulin. The chain is Tubulin alpha-8 chain (tba-8) from Caenorhabditis elegans.